Reading from the N-terminus, the 108-residue chain is Circadian clock oscillator protein KaiB (108 aa).

The protein belongs to the KaiB family. Homodimer, interacts with KaiC. The KaiABC complex composition changes during the circadian cycle to control KaiC phosphorylation. Complexes KaiC(6), KaiA(2-4):KaiC(6), KaiB(6):KaiC(6) and KaiC(6):KaiB(6):KaiA(12) are among the most important forms, many form cooperatively. Undergoes a major conformational rearrangment; in the free state forms homotetramers as a dimer of dimers. When bound to the CI domain of KaiC switches to a monomeric thioredoxin-fold (KaiB(fs)). KaiB(fs) binds CikA, leading it to dephosphorylate phospho-RpaA.

Functionally, key component of the KaiABC oscillator complex, which constitutes the main circadian regulator in cyanobacteria. Complex composition changes during the circadian cycle to control KaiC phosphorylation. KaiA stimulates KaiC autophosphorylation, while KaiB sequesters KaiA, leading to KaiC autodephosphorylation. Phospho-Ser-431 KaiC accumulation triggers binding of KaiB to form the KaiB(6):KaiC(6) complex, leading to changes in output regulators CikA and SasA. KaiB switches to a thioredoxin-like fold (KaiB(fs)) when bound to KaiC. KaiB(6):KaiC(6) formation exposes a site for KaiA binding that sequesters KaiA from KaiC, making the KaiC(6):KaiB(6):KaiA(12) complex that results in KaiC autodephosphorylation. In terms of biological role, a metamorphic protein which reversibly switches between an inactive tetrameric fold and a rare, thioredoxin-like monomeric fold (KaiB(fs)). KaiB(fs) binds phospho-KaiC, KaiA and CikA. KaiA and CikA compete for binding to KaiB(fs), and KaiB(fs) and SasA compete for binding to KaiC, thus the clock oscillator and output signal pathway are tightly coupled. The chain is Circadian clock oscillator protein KaiB from Nostoc sp. (strain PCC 7120 / SAG 25.82 / UTEX 2576).